The primary structure comprises 229 residues: Mediator of RNA polymerase II transcription subunit 7 (229 aa).

It belongs to the Mediator complex subunit 7 family. As to quaternary structure, component of the Mediator complex.

Its subcellular location is the nucleus. Component of the Mediator complex, a coactivator involved in the regulated transcription of nearly all RNA polymerase II-dependent genes. Mediator functions as a bridge to convey information from gene-specific regulatory proteins to the basal RNA polymerase II transcription machinery. Mediator is recruited to promoters by direct interactions with regulatory proteins and serves as a scaffold for the assembly of a functional preinitiation complex with RNA polymerase II and the general transcription factors. The polypeptide is Mediator of RNA polymerase II transcription subunit 7 (med7) (Xenopus tropicalis (Western clawed frog)).